The chain runs to 427 residues: Serine--tRNA ligase (427 aa).

Position 232–234 (Thr-232–Glu-234) interacts with L-serine. Arg-263 to Glu-265 is an ATP binding site. Glu-286 contributes to the L-serine binding site. ATP is bound at residue Glu-350 to Ser-353. Ser-385 is an L-serine binding site.

This sequence belongs to the class-II aminoacyl-tRNA synthetase family. Type-1 seryl-tRNA synthetase subfamily. In terms of assembly, homodimer. The tRNA molecule binds across the dimer.

It localises to the cytoplasm. The catalysed reaction is tRNA(Ser) + L-serine + ATP = L-seryl-tRNA(Ser) + AMP + diphosphate + H(+). The enzyme catalyses tRNA(Sec) + L-serine + ATP = L-seryl-tRNA(Sec) + AMP + diphosphate + H(+). It participates in aminoacyl-tRNA biosynthesis; selenocysteinyl-tRNA(Sec) biosynthesis; L-seryl-tRNA(Sec) from L-serine and tRNA(Sec): step 1/1. Catalyzes the attachment of serine to tRNA(Ser). Is also able to aminoacylate tRNA(Sec) with serine, to form the misacylated tRNA L-seryl-tRNA(Sec), which will be further converted into selenocysteinyl-tRNA(Sec). This Lacticaseibacillus casei (strain BL23) (Lactobacillus casei) protein is Serine--tRNA ligase.